The chain runs to 1733 residues: Polyketide synthase Pks13 (1733 aa).

In terms of domain architecture, Carrier 1 spans E17–E95. S55 carries the O-(pantetheine 4'-phosphoryl)serine modification. Residues R116–E541 enclose the Ketosynthase family 3 (KS3) domain. Catalysis depends on C287, which acts as the Acyl-thioester intermediate; for beta-ketoacyl synthase activity. Active-site for beta-ketoacyl synthase activity residues include H423 and H463. The segment covering V548–A560 has biased composition (basic and acidic residues). The interval V548–A567 is disordered. Positions V713 to V1034 are acyltransferase. Catalysis depends on S801, which acts as the Acyl-ester intermediate; for acyltransferase activity. Positions E1232–R1309 constitute a Carrier 2 domain. O-(pantetheine 4'-phosphoryl)serine is present on S1266. Positions P1344–A1368 are disordered. Positions P1470–R1563 are thioesterase-like. S1533 serves as the catalytic For thioesterase-like activity.

In terms of processing, 4'-phosphopantetheine is transferred from CoA to specific serines of apo-Pks13 by PptT.

The protein operates within lipid metabolism; mycolic acid biosynthesis. The presence of FadD32 is necessary for the transfer of the acyl chain from the AMP carrier onto Pks13. In terms of biological role, involved in the biosynthesis of mycolic acids. Forms, with FadD32, the initiation module of the mycolic condensation system. Synthesizes, in coupled reaction with FadD32, the biosynthetic precursors of mycolic acids, alpha-alkyl beta-ketoacids, via the condensation of two long chain fatty acid derivatives, a very long meromycoloyl-AMP and a shorter 2-carboxyacyl-CoA. The acyl chain of the acyl-AMP produced by FadD32 is specifically transferred onto the N-terminal ACP domain of Pks13, and then transferred onto the KS domain. The extender unit carboxyacyl-CoA is specifically loaded onto the AT domain, which catalyzes the covalent attachment of the carboxyacyl chain to its active site, and its subsequent transfer onto the P-pant arm of the C-terminal ACP domain. The KS domain catalyzes the condensation between the two loaded fatty acyl chains to produce an alpha-alkyl beta-ketothioester linked to the C-ACP domain. Then, the thioesterase-like domain acts as a transacylase and is responsible for both the release and the transfer of the alpha-alkyl beta-ketoacyl chain onto a polyol acceptor molecule, particularly trehalose, leading to the formation of the trehalose monomycolate precursor. The sequence is that of Polyketide synthase Pks13 from Mycobacterium tuberculosis (strain ATCC 25618 / H37Rv).